The sequence spans 172 residues: Bone marrow stromal antigen 2 (172 aa).

Residues 1 to 26 (MAPSFYHYLPVAMDERWEPKGWSIRR) are Cytoplasmic-facing. K20 participates in a covalent cross-link: Glycyl lysine isopeptide (Lys-Gly) (interchain with G-Cter in ubiquitin). Residues 27 to 47 (WWLVAAILVVLIGVVLVCLIV) traverse the membrane as a helical; Signal-anchor for type II membrane protein segment. Topologically, residues 48-152 (YFANAAHSEA…EISTTVQVNS (105 aa)) are extracellular. N70 and N97 each carry an N-linked (GlcNAc...) asparagine glycan. The stretch at 103–149 (LRDSLKKKVSQTQEQQARIKELENKIERLNQELENLRTQKEISTTVQ) forms a coiled coil. The GPI-anchor amidated serine moiety is linked to residue S152. The propeptide at 153–172 (GGSVVVSSLLVLVAVLFLHF) is removed in mature form.

In terms of assembly, parallel homodimer; disulfide-linked. May form homotetramers under reducing conditions. Isoform 1 and isoform 2 form homodimers and also heterodimers with each other. Dimerization is essential for its antiviral activity. Interacts (via cytoplasmic domain) with ARHGAP44. Interacts with MMP14 (via C-terminal cytoplasmic tail). Interacts with LILRA4/ILT7. Interacts with RNF115. N-glycosylated. In terms of processing, the GPI anchor is essential for its antiviral activity. In terms of tissue distribution, ubiquitously expressed, with highest levels in brain and liver. Present in liver (at protein level).

Its subcellular location is the golgi apparatus. It localises to the trans-Golgi network. It is found in the cell membrane. The protein resides in the late endosome. The protein localises to the membrane raft. Its subcellular location is the cytoplasm. It localises to the apical cell membrane. In terms of biological role, IFN-induced antiviral host restriction factor which efficiently blocks the release of diverse mammalian enveloped viruses by directly tethering nascent virions to the membranes of infected cells. Acts as a direct physical tether, holding virions to the cell membrane and linking virions to each other. The tethered virions can be internalized by endocytosis and subsequently degraded or they can remain on the cell surface. In either case, their spread as cell-free virions is restricted. Its target viruses belong to diverse families, including retroviridae: human immunodeficiency virus type 1 (HIV-1), mouse mammary tumor virus (MMTV) and murine leukemia virus (MLV), filoviridae: ebola virus (EBOV), arenaviridae: lassa virus (LASV), and rhabdoviridae: vesicular stomatitis virus (VSV). Can inhibit cell surface proteolytic activity of MMP14 causing decreased activation of MMP15 which results in inhibition of cell growth and migration. Can stimulate signaling by LILRA4/ILT7 and consequently provide negative feedback to the production of IFN by plasmacytoid dendritic cells in response to viral infection. Plays a role in the organization of the subapical actin cytoskeleton in polarized epithelial cells. The chain is Bone marrow stromal antigen 2 (Bst2) from Rattus norvegicus (Rat).